The chain runs to 255 residues: Urease accessory protein UreD 1 (255 aa).

The protein belongs to the UreD family. In terms of assembly, ureD, UreF and UreG form a complex that acts as a GTP-hydrolysis-dependent molecular chaperone, activating the urease apoprotein by helping to assemble the nickel containing metallocenter of UreC. The UreE protein probably delivers the nickel.

The protein resides in the cytoplasm. Functionally, required for maturation of urease via the functional incorporation of the urease nickel metallocenter. The protein is Urease accessory protein UreD 1 of Saccharopolyspora erythraea (strain ATCC 11635 / DSM 40517 / JCM 4748 / NBRC 13426 / NCIMB 8594 / NRRL 2338).